A 775-amino-acid polypeptide reads, in one-letter code: Lon protease (775 aa).

Residues 6 to 207 (LPLMALRDIV…TIINILTSNI (202 aa)) enclose the Lon N-terminal domain. 356–363 (GPPGVGKT) contacts ATP. A Lon proteolytic domain is found at 592-773 (NDQIGSTTGL…DQVLEHALTK (182 aa)). Catalysis depends on residues Ser-679 and Lys-722.

The protein belongs to the peptidase S16 family. In terms of assembly, homohexamer. Organized in a ring with a central cavity.

The protein resides in the cytoplasm. The catalysed reaction is Hydrolysis of proteins in presence of ATP.. In terms of biological role, ATP-dependent serine protease that mediates the selective degradation of mutant and abnormal proteins as well as certain short-lived regulatory proteins. Required for cellular homeostasis and for survival from DNA damage and developmental changes induced by stress. Degrades polypeptides processively to yield small peptide fragments that are 5 to 10 amino acids long. Binds to DNA in a double-stranded, site-specific manner. The protein is Lon protease of Rickettsia bellii (strain RML369-C).